A 117-amino-acid polypeptide reads, in one-letter code: UPF0342 protein lwe2240 (117 aa).

It belongs to the UPF0342 family.

The polypeptide is UPF0342 protein lwe2240 (Listeria welshimeri serovar 6b (strain ATCC 35897 / DSM 20650 / CCUG 15529 / CIP 8149 / NCTC 11857 / SLCC 5334 / V8)).